The sequence spans 156 residues: MAARRPRTAPEHESDDDSYEVLDLTEYARRHHWWNRLFGRNSGPIVEKYSVATQIVMGGVTGWCAGFLFQKVGKLAATAVGGGFLLLQIASHSGYVQVDWKRVEKDVNKAKKQLKKRANKAAPEINTLIEESTEFIKQNIVVSSGFVGGFLLGLAS.

Residues 19 to 22 (YEVL) carry the YXXL motif. Helical transmembrane passes span 49–69 (YSVA…GFLF), 76–96 (AATA…SGYV), and 135–155 (FIKQ…LGLA).

This sequence belongs to the FUN14 family.

The protein resides in the mitochondrion outer membrane. In terms of biological role, acts as an activator of hypoxia-induced mitophagy, an important mechanism for mitochondrial quality control. The polypeptide is FUN14 domain-containing protein 1 (FUNDC1) (Gallus gallus (Chicken)).